Here is a 195-residue protein sequence, read N- to C-terminus: Glycerol-3-phosphate acyltransferase 2 (195 aa).

Helical transmembrane passes span 4-24, 52-72, 73-93, 115-135, 150-170, and 171-191; these read VVSLAVVFVLSYLLGSLVAGV, GAAAAVTLADILKGAAAVGLA, LWLAPQALPLATALATFGVVF, AMLVVAPWTLLATVTFALALI, AIPFATVVAVPVGLLIASRLG, and GGAEFLAGSAAMGIRAVHLLA.

Belongs to the PlsY family. As to quaternary structure, probably interacts with PlsX.

The protein resides in the cell membrane. It catalyses the reaction an acyl phosphate + sn-glycerol 3-phosphate = a 1-acyl-sn-glycero-3-phosphate + phosphate. It functions in the pathway lipid metabolism; phospholipid metabolism. Its function is as follows. Catalyzes the transfer of an acyl group from acyl-phosphate (acyl-PO(4)) to glycerol-3-phosphate (G3P) to form lysophosphatidic acid (LPA). This enzyme utilizes acyl-phosphate as fatty acyl donor, but not acyl-CoA or acyl-ACP. The protein is Glycerol-3-phosphate acyltransferase 2 of Deinococcus radiodurans (strain ATCC 13939 / DSM 20539 / JCM 16871 / CCUG 27074 / LMG 4051 / NBRC 15346 / NCIMB 9279 / VKM B-1422 / R1).